Consider the following 351-residue polypeptide: Probable dual-specificity RNA methyltransferase RlmN (351 aa).

The Proton acceptor role is filled by E92. A Radical SAM core domain is found at 98-332 (TDQRLTVCIS…VSLRASRGLD (235 aa)). The cysteines at positions 105 and 337 are disulfide-linked. Residues C112, C116, and C119 each coordinate [4Fe-4S] cluster. Residues 159–160 (GE), S189, 218–220 (SLH), and N294 contribute to the S-adenosyl-L-methionine site. The active-site S-methylcysteine intermediate is C337.

This sequence belongs to the radical SAM superfamily. RlmN family. It depends on [4Fe-4S] cluster as a cofactor.

The protein resides in the cytoplasm. The catalysed reaction is adenosine(2503) in 23S rRNA + 2 reduced [2Fe-2S]-[ferredoxin] + 2 S-adenosyl-L-methionine = 2-methyladenosine(2503) in 23S rRNA + 5'-deoxyadenosine + L-methionine + 2 oxidized [2Fe-2S]-[ferredoxin] + S-adenosyl-L-homocysteine. It carries out the reaction adenosine(37) in tRNA + 2 reduced [2Fe-2S]-[ferredoxin] + 2 S-adenosyl-L-methionine = 2-methyladenosine(37) in tRNA + 5'-deoxyadenosine + L-methionine + 2 oxidized [2Fe-2S]-[ferredoxin] + S-adenosyl-L-homocysteine. In terms of biological role, specifically methylates position 2 of adenine 2503 in 23S rRNA and position 2 of adenine 37 in tRNAs. The sequence is that of Probable dual-specificity RNA methyltransferase RlmN from Synechococcus sp. (strain CC9902).